A 273-amino-acid polypeptide reads, in one-letter code: Ribosomal RNA small subunit methyltransferase A (273 aa).

6 residues coordinate S-adenosyl-L-methionine: Asn18, Leu20, Gly45, Glu66, Asp91, and Asn113.

It belongs to the class I-like SAM-binding methyltransferase superfamily. rRNA adenine N(6)-methyltransferase family. RsmA subfamily.

It localises to the cytoplasm. It carries out the reaction adenosine(1518)/adenosine(1519) in 16S rRNA + 4 S-adenosyl-L-methionine = N(6)-dimethyladenosine(1518)/N(6)-dimethyladenosine(1519) in 16S rRNA + 4 S-adenosyl-L-homocysteine + 4 H(+). In terms of biological role, specifically dimethylates two adjacent adenosines (A1518 and A1519) in the loop of a conserved hairpin near the 3'-end of 16S rRNA in the 30S particle. May play a critical role in biogenesis of 30S subunits. The sequence is that of Ribosomal RNA small subunit methyltransferase A from Salmonella schwarzengrund (strain CVM19633).